An 802-amino-acid polypeptide reads, in one-letter code: MGHPPLEFSDCYLDSPDFRQRLKYYEEELERTNKFIKDVIKDGSALISAMRNYSSAVQKFSQTLQSFQFDFIGDTLTDDEINIAESFKEFAELLNEVENERMMMVQNASDLLIKPLETFRKEQIGFTKERKKKFEKDGERFYSLLDRHLHLSSKKKESQLLEADLQVDKERHNFFESSLDYVYQIQEVQESKKFNIVEPVLAFLHSLFISNSLTVELTQDFLPYKQQLQLSLQNTRNHFSSTREEMEELKKRMKEAPQTCKLPGQPTIEGYLYTQEKWALGISWAKYYCRYEKETRMLTMIPMEQKPGAKQGPVDLTLKYCVRRKTESIDKRFCFDIETNERPGTITLQAPSEANRRLWMEAMDGKEPIYHTPITKQEEMELNEVGFKFVRKCINFIETKGIKTEGLYRTVGSNIQVQKLLYAFFDPKCPGDVDFHNSDWDIKTITSSLKFYLRNLSEPVMTYKLHKELVSAAKSDNLDYRLGAIHSLVYKLPEKNREMLELLIKHLVNVCEHSKENLMTPSNMGVIFGPTLMRAQEDTVAAMMNIKFQNIVVEILIEHFGKIYLGPPEDSQVPPVPPPRVTARRHKPITISKRLLREKTVFYTSSLDENKDESHHQTPNGTITSNLDPPKLLQHLKPPMQKSGETDPGRKSPSRPVSDCQSEPCLETDVGRLLFRLQDGGTKATPKASNGPVPGSGHTKTSSFHIRRPAPRPMAHHKEGDTDGFSKVRPPGEKQTIIRPPVRPPDPPCRSITPQKPEPKPETGSGNADEIPSSVVASRTRFFETASRKTGSSQGKLPGDES.

The region spanning 265-368 is the PH domain; the sequence is QPTIEGYLYT…WMEAMDGKEP (104 aa). The Rho-GAP domain occupies 380–564; sequence MELNEVGFKF…ILIEHFGKIY (185 aa). Disordered stretches follow at residues 606-665 and 681-802; these read SLDE…SEPC and GTKA…GDES. Residues 617–627 show a composition bias toward polar residues; it reads QTPNGTITSNL. Residues 716–732 are compositionally biased toward basic and acidic residues; that stretch reads HHKEGDTDGFSKVRPPG.

In terms of assembly, interacts with HOMER1. Interacts with AMPA receptor complexes. Interacts with SH3GL2 (endophilin-A1). Interacts (via C-terminus) with NR1D1.

It localises to the postsynapse. The protein resides in the presynapse. It is found in the cell projection. The protein localises to the axon. Its subcellular location is the dendritic spine. It localises to the dendrite. The protein resides in the cytoplasm. Its function is as follows. Stimulates GTP hydrolysis of members of the Rho family. Its action on RHOA activity and signaling is implicated in growth and stabilization of dendritic spines, and therefore in synaptic function. Critical for the stabilization of AMPA receptors at postsynaptic sites. Critical for the regulation of synaptic vesicle endocytosis at presynaptic terminals. Required for the localization of NR1D1 to dendrites, can suppress its repressor activity and protect it from proteasomal degradation. The sequence is that of Oligophrenin-1 (Ophn1) from Mus musculus (Mouse).